Here is a 210-residue protein sequence, read N- to C-terminus: Thiamine-phosphate synthase 2 (210 aa).

4-amino-2-methyl-5-(diphosphooxymethyl)pyrimidine is bound by residues 38–42 (QLREK) and Asp-70. Mg(2+) contacts are provided by Asp-71 and Glu-90. Thr-109 provides a ligand contact to 4-amino-2-methyl-5-(diphosphooxymethyl)pyrimidine. Residue 135–137 (TTT) coordinates 2-[(2R,5Z)-2-carboxy-4-methylthiazol-5(2H)-ylidene]ethyl phosphate. Lys-138 contributes to the 4-amino-2-methyl-5-(diphosphooxymethyl)pyrimidine binding site. Gly-165 provides a ligand contact to 2-[(2R,5Z)-2-carboxy-4-methylthiazol-5(2H)-ylidene]ethyl phosphate.

This sequence belongs to the thiamine-phosphate synthase family. Mg(2+) is required as a cofactor.

It catalyses the reaction 2-[(2R,5Z)-2-carboxy-4-methylthiazol-5(2H)-ylidene]ethyl phosphate + 4-amino-2-methyl-5-(diphosphooxymethyl)pyrimidine + 2 H(+) = thiamine phosphate + CO2 + diphosphate. It carries out the reaction 2-(2-carboxy-4-methylthiazol-5-yl)ethyl phosphate + 4-amino-2-methyl-5-(diphosphooxymethyl)pyrimidine + 2 H(+) = thiamine phosphate + CO2 + diphosphate. The enzyme catalyses 4-methyl-5-(2-phosphooxyethyl)-thiazole + 4-amino-2-methyl-5-(diphosphooxymethyl)pyrimidine + H(+) = thiamine phosphate + diphosphate. It functions in the pathway cofactor biosynthesis; thiamine diphosphate biosynthesis; thiamine phosphate from 4-amino-2-methyl-5-diphosphomethylpyrimidine and 4-methyl-5-(2-phosphoethyl)-thiazole: step 1/1. Its function is as follows. Condenses 4-methyl-5-(beta-hydroxyethyl)thiazole monophosphate (THZ-P) and 2-methyl-4-amino-5-hydroxymethyl pyrimidine pyrophosphate (HMP-PP) to form thiamine monophosphate (TMP). The sequence is that of Thiamine-phosphate synthase 2 from Streptococcus pneumoniae serotype 4 (strain ATCC BAA-334 / TIGR4).